The following is a 147-amino-acid chain: Deoxyuridine 5'-triphosphate nucleotidohydrolase (147 aa).

Residues serine 69, glycine 82, aspartate 85, tyrosine 88, lysine 93, arginine 137, phenylalanine 142, and glycine 143 each contribute to the dUMP site.

This sequence belongs to the dUTPase family. In terms of assembly, homotrimer. It depends on Mg(2+) as a cofactor.

The catalysed reaction is dUTP + H2O = dUMP + diphosphate + H(+). Its pathway is pyrimidine metabolism; dUMP biosynthesis; dUMP from dCTP (dUTP route): step 2/2. Its function is as follows. Involved in nucleotide metabolism via production of dUMP, the immediate precursor of thymidine nucleotides, and decreases the intracellular concentration of dUTP so that uracil cannot be incorporated into DNA. Shows a significant activity against dITP, another potentially mutagenic nucleotide. The chain is Deoxyuridine 5'-triphosphate nucleotidohydrolase from Saccharomyces cerevisiae (strain ATCC 204508 / S288c) (Baker's yeast).